The primary structure comprises 315 residues: tRNA pseudouridine synthase B (315 aa).

The Nucleophile role is filled by aspartate 54.

The protein belongs to the pseudouridine synthase TruB family. Type 1 subfamily.

It carries out the reaction uridine(55) in tRNA = pseudouridine(55) in tRNA. In terms of biological role, responsible for synthesis of pseudouridine from uracil-55 in the psi GC loop of transfer RNAs. The protein is tRNA pseudouridine synthase B of Cupriavidus taiwanensis (strain DSM 17343 / BCRC 17206 / CCUG 44338 / CIP 107171 / LMG 19424 / R1) (Ralstonia taiwanensis (strain LMG 19424)).